The chain runs to 390 residues: Galactokinase (390 aa).

A substrate-binding site is contributed by 33 to 36 (EHTD). ATP is bound by residues Ser-67 and 124-130 (GAGLSSS). Positions 130 and 162 each coordinate Mg(2+). Asp-174 (proton acceptor) is an active-site residue. Residue Tyr-224 participates in substrate binding.

This sequence belongs to the GHMP kinase family. GalK subfamily.

The protein resides in the cytoplasm. It catalyses the reaction alpha-D-galactose + ATP = alpha-D-galactose 1-phosphate + ADP + H(+). It functions in the pathway carbohydrate metabolism; galactose metabolism. In terms of biological role, catalyzes the transfer of the gamma-phosphate of ATP to D-galactose to form alpha-D-galactose-1-phosphate (Gal-1-P). The sequence is that of Galactokinase from Bacillus subtilis (strain 168).